A 399-amino-acid chain; its full sequence is Argininosuccinate synthase (399 aa).

8–16 (AYSGGLDTS) contributes to the ATP binding site. Y87 is a binding site for L-citrulline. Position 117 (G117) interacts with ATP. Residues T119, N123, and D124 each contribute to the L-aspartate site. An L-citrulline-binding site is contributed by N123. L-citrulline-binding residues include R127, S175, E260, and Y272.

Belongs to the argininosuccinate synthase family. Type 1 subfamily. Homotetramer.

It is found in the cytoplasm. The enzyme catalyses L-citrulline + L-aspartate + ATP = 2-(N(omega)-L-arginino)succinate + AMP + diphosphate + H(+). It participates in amino-acid biosynthesis; L-arginine biosynthesis; L-arginine from L-ornithine and carbamoyl phosphate: step 2/3. The protein is Argininosuccinate synthase of Mycolicibacterium smegmatis (strain ATCC 700084 / mc(2)155) (Mycobacterium smegmatis).